A 142-amino-acid polypeptide reads, in one-letter code: ATP synthase subunit b' (142 aa).

Residues 7-27 traverse the membrane as a helical segment; it reads TLPLMMFQFFLLVAVLNAVFF.

The protein belongs to the ATPase B chain family. In terms of assembly, F-type ATPases have 2 components, F(1) - the catalytic core - and F(0) - the membrane proton channel. F(1) has five subunits: alpha(3), beta(3), gamma(1), delta(1), epsilon(1). F(0) has four main subunits: a(1), b(1), b'(1) and c(10-14). The alpha and beta chains form an alternating ring which encloses part of the gamma chain. F(1) is attached to F(0) by a central stalk formed by the gamma and epsilon chains, while a peripheral stalk is formed by the delta, b and b' chains.

It is found in the cellular thylakoid membrane. F(1)F(0) ATP synthase produces ATP from ADP in the presence of a proton or sodium gradient. F-type ATPases consist of two structural domains, F(1) containing the extramembraneous catalytic core and F(0) containing the membrane proton channel, linked together by a central stalk and a peripheral stalk. During catalysis, ATP synthesis in the catalytic domain of F(1) is coupled via a rotary mechanism of the central stalk subunits to proton translocation. Functionally, component of the F(0) channel, it forms part of the peripheral stalk, linking F(1) to F(0). The b'-subunit is a diverged and duplicated form of b found in plants and photosynthetic bacteria. The protein is ATP synthase subunit b' of Acaryochloris marina (strain MBIC 11017).